We begin with the raw amino-acid sequence, 54 residues long: Ovomucoid (54 aa).

In terms of domain architecture, Kazal-like spans 4–54 (VDCSDYPKPVCTLEDMPLCGSDNITYHNKCYFCNAVAHSNGTLTFSHFGKC). Cystine bridges form between Cys6–Cys36, Cys14–Cys33, and Cys22–Cys54. Asn43 carries N-linked (GlcNAc...) asparagine glycosylation.

Its subcellular location is the secreted. This is Ovomucoid from Carpococcyx renauldi (Coral-billed ground-cuckoo).